Reading from the N-terminus, the 550-residue chain is Methyl-accepting chemotaxis protein PcaY (550 aa).

At 1–19 the chain is on the cytoplasmic side; that stretch reads MVPTRSTARMLANLKIRTG. Residues 20 to 40 traverse the membrane as a helical segment; sequence MFWVLSLFSLTLLFSTASAWW. At 41 to 198 the chain is on the periplasmic side; sequence AALGSDQQIT…ESDRRLARAQ (158 aa). The segment at 44–196 is ligand-binding domain; sequence GSDQQITELD…MLESDRRLAR (153 aa). The benzoate site is built by arginine 71 and asparagine 75. Salicylate contacts are provided by arginine 71, asparagine 75, and tyrosine 135. Position 71 to 78 (71 to 78) interacts with 3,4-dihydroxybenzoate; it reads RSSANVSS. Residues 71–78, tyrosine 135, glutamine 142, and asparagine 158 contribute to the L-quinate site; that span reads RSSANVSS. Glutamine 169 is a binding site for 3,4-dihydroxybenzoate. The helical transmembrane segment at 199–219 threads the bilayer; sequence LLSLCLLGVTVVLAVLCWAFI. The Cytoplasmic segment spans residues 220 to 550; sequence AQRVLHPLRE…MTALVGRFKV (331 aa). Residues 221-273 enclose the HAMP domain; that stretch reads QRVLHPLREAGGHFRRIASGDLSVPVQGQGNNEIGQLFHELQRMQQSQRDTLG. A Methyl-accepting transducer domain is found at 278–514; sequence CARQLDAAAT…EVDRNLLNIR (237 aa).

This sequence belongs to the methyl-accepting chemotaxis (MCP) protein family. As to quaternary structure, ligand free PcaY_PP-ligand-binding domain (LBD) is present in a monomer-dimer equilibrium. Only the dimeric LBD is able to bind ligands which in turn causes dimer stabilization.

Its subcellular location is the cell inner membrane. Chemotactic-signal transducers respond to changes in the concentration of attractants and repellents in the environment, transduce a signal from the outside to the inside of the cell, and facilitate sensory adaptation through the variation of the level of methylation. PcaY recognizes a wide range of compounds containing a C6-membered ring with a carboxylate group. Binds preferentially compounds that serve as carbon sources and among them those that rapidly promote growth. Tightest binding compounds are quinate, shikimate, 3-dehydroshikimate and protocatechuate, which are at the interception of the biosynthetic shikimate and catabolic quinate pathways. The polypeptide is Methyl-accepting chemotaxis protein PcaY (Pseudomonas putida (strain ATCC 47054 / DSM 6125 / CFBP 8728 / NCIMB 11950 / KT2440)).